The primary structure comprises 182 residues: NAD(P)H-quinone oxidoreductase subunit J (182 aa).

The protein belongs to the complex I 30 kDa subunit family. NDH-1 can be composed of about 15 different subunits; different subcomplexes with different compositions have been identified which probably have different functions.

Its subcellular location is the cellular thylakoid membrane. It carries out the reaction a plastoquinone + NADH + (n+1) H(+)(in) = a plastoquinol + NAD(+) + n H(+)(out). The enzyme catalyses a plastoquinone + NADPH + (n+1) H(+)(in) = a plastoquinol + NADP(+) + n H(+)(out). In terms of biological role, NDH-1 shuttles electrons from an unknown electron donor, via FMN and iron-sulfur (Fe-S) centers, to quinones in the respiratory and/or the photosynthetic chain. The immediate electron acceptor for the enzyme in this species is believed to be plastoquinone. Couples the redox reaction to proton translocation, and thus conserves the redox energy in a proton gradient. Cyanobacterial NDH-1 also plays a role in inorganic carbon-concentration. The sequence is that of NAD(P)H-quinone oxidoreductase subunit J from Synechococcus sp. (strain WH7803).